The chain runs to 598 residues: Elongation factor 4 (598 aa).

Positions 2 to 184 (QHIRNFSIIA…TVVRRVPPPK (183 aa)) constitute a tr-type G domain. GTP-binding positions include 14 to 19 (DHGKST) and 131 to 134 (NKID).

It belongs to the TRAFAC class translation factor GTPase superfamily. Classic translation factor GTPase family. LepA subfamily.

It localises to the cell inner membrane. It carries out the reaction GTP + H2O = GDP + phosphate + H(+). Required for accurate and efficient protein synthesis under certain stress conditions. May act as a fidelity factor of the translation reaction, by catalyzing a one-codon backward translocation of tRNAs on improperly translocated ribosomes. Back-translocation proceeds from a post-translocation (POST) complex to a pre-translocation (PRE) complex, thus giving elongation factor G a second chance to translocate the tRNAs correctly. Binds to ribosomes in a GTP-dependent manner. The polypeptide is Elongation factor 4 (Aromatoleum aromaticum (strain DSM 19018 / LMG 30748 / EbN1) (Azoarcus sp. (strain EbN1))).